The following is a 420-amino-acid chain: UDP-N-acetylglucosamine 1-carboxyvinyltransferase (420 aa).

Residue 22–23 (KN) coordinates phosphoenolpyruvate. Arg-92 serves as a coordination point for UDP-N-acetyl-alpha-D-glucosamine. The active-site Proton donor is the Cys-116. Cys-116 bears the 2-(S-cysteinyl)pyruvic acid O-phosphothioketal mark. Residues Asp-306 and Ile-328 each contribute to the UDP-N-acetyl-alpha-D-glucosamine site.

Belongs to the EPSP synthase family. MurA subfamily.

It localises to the cytoplasm. It catalyses the reaction phosphoenolpyruvate + UDP-N-acetyl-alpha-D-glucosamine = UDP-N-acetyl-3-O-(1-carboxyvinyl)-alpha-D-glucosamine + phosphate. It participates in cell wall biogenesis; peptidoglycan biosynthesis. Functionally, cell wall formation. Adds enolpyruvyl to UDP-N-acetylglucosamine. The protein is UDP-N-acetylglucosamine 1-carboxyvinyltransferase of Blochmanniella floridana.